The following is a 280-amino-acid chain: Acyl-[acyl-carrier-protein]--UDP-N-acetylglucosamine O-acyltransferase (280 aa).

The protein belongs to the transferase hexapeptide repeat family. LpxA subfamily. In terms of assembly, homotrimer.

The protein localises to the cytoplasm. The enzyme catalyses a (3R)-hydroxyacyl-[ACP] + UDP-N-acetyl-alpha-D-glucosamine = a UDP-3-O-[(3R)-3-hydroxyacyl]-N-acetyl-alpha-D-glucosamine + holo-[ACP]. It functions in the pathway glycolipid biosynthesis; lipid IV(A) biosynthesis; lipid IV(A) from (3R)-3-hydroxytetradecanoyl-[acyl-carrier-protein] and UDP-N-acetyl-alpha-D-glucosamine: step 1/6. Its function is as follows. Involved in the biosynthesis of lipid A, a phosphorylated glycolipid that anchors the lipopolysaccharide to the outer membrane of the cell. In Chlamydia trachomatis serovar L2 (strain ATCC VR-902B / DSM 19102 / 434/Bu), this protein is Acyl-[acyl-carrier-protein]--UDP-N-acetylglucosamine O-acyltransferase.